Consider the following 179-residue polypeptide: Large ribosomal subunit protein uL5 (179 aa).

This sequence belongs to the universal ribosomal protein uL5 family. In terms of assembly, part of the 50S ribosomal subunit; part of the 5S rRNA/L5/L18/L25 subcomplex. Contacts the 5S rRNA and the P site tRNA. Forms a bridge to the 30S subunit in the 70S ribosome.

In terms of biological role, this is one of the proteins that bind and probably mediate the attachment of the 5S RNA into the large ribosomal subunit, where it forms part of the central protuberance. In the 70S ribosome it contacts protein S13 of the 30S subunit (bridge B1b), connecting the 2 subunits; this bridge is implicated in subunit movement. Contacts the P site tRNA; the 5S rRNA and some of its associated proteins might help stabilize positioning of ribosome-bound tRNAs. The protein is Large ribosomal subunit protein uL5 of Dechloromonas aromatica (strain RCB).